Reading from the N-terminus, the 306-residue chain is Follistatin-related protein 1 (306 aa).

A signal peptide spans 1 to 18 (MWKRWLALALVTIALVHG). Residues 28-51 (ICANVFCGAGRECAVTEKGEPTCL) form the Follistatin-like domain. 5 disulfides stabilise this stretch: Cys29/Cys40, Cys34/Cys50, Cys52/Cys82, Cys56/Cys75, and Cys64/Cys96. Residues 46–98 (GEPTCLCIEQCKPHKRPVCGSNGKTYLNHCELHRDACLTGSKIQVDYDGHCKE) form the Kazal-like domain. N-linked (GlcNAc...) asparagine glycosylation is present at Asn142. Positions 142-176 (NYSEILDKYFKSFDNGDSHLDSSEFLKFVEQNETA) constitute an EF-hand 1 domain. A Phosphoserine modification is found at Ser163. Asn173 and Asn178 each carry an N-linked (GlcNAc...) asparagine glycan. The region spanning 191–226 (LRGLCVDALIELSDENADWKLSFQEFLKCLNPSFNP) is the EF-hand 2 domain. Positions 231–285 (CALEDETYADGAETEVDCNRCVCSCGHWVCTAMTCDGKNQKGVQTHTEEEMTRYA) constitute a VWFC domain.

As to quaternary structure, homodimer. Interacts with SCN10A. Interacts with DIP2A; DIP2A may act as a cell surface receptor for FSTL1. Interacts with BMP4. Interacts with CD14; this interaction promotes TL4-mediated signaling cascade.

Its subcellular location is the secreted. Functionally, secreted glycoprotein that is involved in various physiological processes, such as angiogenesis, regulation of the immune response, cell proliferation and differentiation. Plays a role in the development of the central nervous system, skeletal system, lungs, and ureter. Promotes endothelial cell survival, migration and differentiation into network structures in an AKT-dependent manner. Also promotes survival of cardiac myocytes. Initiates various signaling cascades by activating different receptors on the cell surface such as DIP2A, TLR4 or BMP receptors. The sequence is that of Follistatin-related protein 1 (Fstl1) from Rattus norvegicus (Rat).